We begin with the raw amino-acid sequence, 230 residues long: Sugar fermentation stimulation protein homolog (230 aa).

It belongs to the SfsA family.

The sequence is that of Sugar fermentation stimulation protein homolog from Clostridium perfringens (strain 13 / Type A).